The primary structure comprises 353 residues: S-adenosylmethionine:tRNA ribosyltransferase-isomerase (353 aa).

This sequence belongs to the QueA family. Monomer.

The protein resides in the cytoplasm. It carries out the reaction 7-aminomethyl-7-carbaguanosine(34) in tRNA + S-adenosyl-L-methionine = epoxyqueuosine(34) in tRNA + adenine + L-methionine + 2 H(+). The protein operates within tRNA modification; tRNA-queuosine biosynthesis. Functionally, transfers and isomerizes the ribose moiety from AdoMet to the 7-aminomethyl group of 7-deazaguanine (preQ1-tRNA) to give epoxyqueuosine (oQ-tRNA). In Dinoroseobacter shibae (strain DSM 16493 / NCIMB 14021 / DFL 12), this protein is S-adenosylmethionine:tRNA ribosyltransferase-isomerase.